We begin with the raw amino-acid sequence, 200 residues long: Recombination protein RecR (200 aa).

Residues 57–72 form a C4-type zinc finger; sequence CSQCRDFTEEDTCNIC. Residues 81-176 enclose the Toprim domain; it reads GLLCVVEMPA…KVSRIAHGIP (96 aa).

Belongs to the RecR family.

In terms of biological role, may play a role in DNA repair. It seems to be involved in an RecBC-independent recombinational process of DNA repair. It may act with RecF and RecO. The sequence is that of Recombination protein RecR from Haemophilus influenzae (strain 86-028NP).